The sequence spans 346 residues: Selenide, water dikinase (346 aa).

Selenocysteine 16 is an active-site residue. Selenocysteine 16 is a non-standard amino acid (selenocysteine). ATP contacts are provided by residues lysine 19 and threonine 47–aspartate 49. Mg(2+) is bound at residue aspartate 50. Residues aspartate 67, aspartate 90, and glycine 138–serine 140 each bind ATP. Aspartate 90 is a binding site for Mg(2+). Aspartate 226 provides a ligand contact to Mg(2+).

This sequence belongs to the selenophosphate synthase 1 family. Class I subfamily. As to quaternary structure, homodimer. It depends on Mg(2+) as a cofactor.

It carries out the reaction hydrogenselenide + ATP + H2O = selenophosphate + AMP + phosphate + 2 H(+). In terms of biological role, synthesizes selenophosphate from selenide and ATP. The polypeptide is Selenide, water dikinase (Haemophilus influenzae (strain ATCC 51907 / DSM 11121 / KW20 / Rd)).